A 401-amino-acid polypeptide reads, in one-letter code: 1-deoxy-D-xylulose 5-phosphate reductoisomerase (401 aa).

NADPH is bound by residues Thr10, Gly11, Ser12, Ile13, Gly36, Asn38, and Asn124. Lys125 provides a ligand contact to 1-deoxy-D-xylulose 5-phosphate. Residue Glu126 coordinates NADPH. A Mn(2+)-binding site is contributed by Asp150. 4 residues coordinate 1-deoxy-D-xylulose 5-phosphate: Ser151, Glu152, Ser186, and His209. Residue Glu152 coordinates Mn(2+). Gly215 is a binding site for NADPH. 1-deoxy-D-xylulose 5-phosphate-binding residues include Ser222, Asn227, Lys228, and Glu231. Glu231 contributes to the Mn(2+) binding site.

This sequence belongs to the DXR family. It depends on Mg(2+) as a cofactor. Mn(2+) is required as a cofactor.

The catalysed reaction is 2-C-methyl-D-erythritol 4-phosphate + NADP(+) = 1-deoxy-D-xylulose 5-phosphate + NADPH + H(+). Its pathway is isoprenoid biosynthesis; isopentenyl diphosphate biosynthesis via DXP pathway; isopentenyl diphosphate from 1-deoxy-D-xylulose 5-phosphate: step 1/6. Functionally, catalyzes the NADPH-dependent rearrangement and reduction of 1-deoxy-D-xylulose-5-phosphate (DXP) to 2-C-methyl-D-erythritol 4-phosphate (MEP). The sequence is that of 1-deoxy-D-xylulose 5-phosphate reductoisomerase from Vibrio parahaemolyticus serotype O3:K6 (strain RIMD 2210633).